The primary structure comprises 498 residues: 3-octaprenyl-4-hydroxybenzoate carboxy-lyase (498 aa).

Asn175 is a binding site for Mn(2+). Residues 178-180 (IYR), 192-194 (RWL), and 197-198 (RG) contribute to the prenylated FMN site. Mn(2+) is bound at residue Glu241. The active-site Proton donor is the Asp290.

Belongs to the UbiD family. In terms of assembly, homohexamer. Requires prenylated FMN as cofactor. Mn(2+) serves as cofactor.

The protein localises to the cell membrane. It carries out the reaction a 4-hydroxy-3-(all-trans-polyprenyl)benzoate + H(+) = a 2-(all-trans-polyprenyl)phenol + CO2. It participates in cofactor biosynthesis; ubiquinone biosynthesis. Functionally, catalyzes the decarboxylation of 3-octaprenyl-4-hydroxy benzoate to 2-octaprenylphenol, an intermediate step in ubiquinone biosynthesis. In Yersinia pestis bv. Antiqua (strain Antiqua), this protein is 3-octaprenyl-4-hydroxybenzoate carboxy-lyase.